Consider the following 258-residue polypeptide: Tryptophan synthase alpha chain (258 aa).

Catalysis depends on proton acceptor residues Glu-47 and Asp-58.

It belongs to the TrpA family. As to quaternary structure, tetramer of two alpha and two beta chains.

It carries out the reaction (1S,2R)-1-C-(indol-3-yl)glycerol 3-phosphate + L-serine = D-glyceraldehyde 3-phosphate + L-tryptophan + H2O. It functions in the pathway amino-acid biosynthesis; L-tryptophan biosynthesis; L-tryptophan from chorismate: step 5/5. Functionally, the alpha subunit is responsible for the aldol cleavage of indoleglycerol phosphate to indole and glyceraldehyde 3-phosphate. This Bacillus cereus (strain ATCC 10987 / NRS 248) protein is Tryptophan synthase alpha chain.